A 297-amino-acid polypeptide reads, in one-letter code: Putative F-box protein At2g19630 (297 aa).

In terms of domain architecture, F-box spans 11 to 60 (TKNSLQIPIDLIIEIFLRLSVNSIARCRCVSKQWASTLSRPYFTELFLTR).

The sequence is that of Putative F-box protein At2g19630 from Arabidopsis thaliana (Mouse-ear cress).